The primary structure comprises 1507 residues: DE-cadherin (1507 aa).

Positions 1–69 (MSTSVQRMSR…AISLLSPALA (69 aa)) are cleaved as a signal peptide. Residues 70–261 (LHSPPDKNFS…IYLKRPIDKR (192 aa)) constitute a propeptide that is removed on maturation. Cadherin domains are found at residues 97–195 (VKEE…APAF), 204–301 (MSEN…PPSF), 311–412 (LKEN…IPYY), 420–522 (ILEN…KPHF), 532–633 (LLED…TILE), 631–733 (ILEE…APFL), and 741–835 (WQEN…NDNA). Residues 262–1328 (PGQSYAIIVR…VAFSFGIDRN (1067 aa)) are Extracellular-facing. 3 N-linked (GlcNAc...) asparagine glycosylation sites follow: N317, N466, and N552. 5 N-linked (GlcNAc...) asparagine glycosylation sites follow: N766, N949, N983, N999, and N1073. The region spanning 1084–1123 (VQAQCVCEAPLMRRCLNGGSPRYGENDVCDCIDGFTGPHC) is the EGF-like domain. Disulfide bonds link C1098–C1112 and C1114–C1123. The 189-residue stretch at 1125–1313 (LVSVAFYGSG…SVFRNIDSGC (189 aa)) folds into the Laminin G-like domain. N-linked (GlcNAc...) asparagine glycans are attached at residues N1145, N1274, and N1290. C1287 and C1313 are oxidised to a cystine. Residues 1329–1349 (FIIAIIVCLALLLIILLAVVV) form a helical membrane-spanning segment. Topologically, residues 1350 to 1507 (QKKQKNGWHE…NVDDDQGWRI (158 aa)) are cytoplasmic. Positions 1350-1507 (QKKQKNGWHE…NVDDDQGWRI (158 aa)) are interaction with Inx2. A disordered region spans residues 1488–1507 (YGEEPSDTDSNVDDDQGWRI). At S1493 the chain carries Phosphoserine.

Interacts (via cytoplasmic region) with Inx2 (via cytoplasmic loop). Interacts with Hakai. Interacts with Myo31DF. N-glycosylation is important for biosynthesis and function. As to expression, in early stage 9 and stage 10 oocytes, expressed in border cells, strongly expressed in polar cells and very weakly expressed in the nurse cells (at protein level). In the embryo, expressed in the leading edge cells of the dorsal epidermis (at protein level). Stage 10 embryos exhibit intense expression in epithelial cells. Stage 14 embryos show expression in the hindgut (at the apical poles of cell-cell boundaries), at the apical junctions of tracheal cells and in the dorsal longitudinal trunk. In stage 16 embryos the glial midline cells of the central nervous system show strong expression.

Its subcellular location is the cell membrane. It localises to the apical cell membrane. Functionally, cadherins are calcium-dependent cell adhesion proteins. In connecting cells they preferentially interact with themselves in a homophilic manner; cadherins may thus contribute to the sorting of heterogeneous cell types. During oogenesis, integral component of the guidance mechanisms that regulate the directional persistent collective migration of the border cell (BC) cluster through the nurse cells to the oocyte. Functions downstream of the two chemoattractant receptors, Pvr and Egfr, to promote BC adhesion between the leader cells of the migrating cluster and the surrounding nurse cells. This adhesion increases Rac1 signaling in the leading cells, which in turn stabilizes DE-cadherin/DE-cadherin adhesions through the formation of forward-directed protrusions which attach/detach to the surrounding nurse cells in order to pull the cluster through the egg chamber to the oocyte. Within the BC cluster, also promotes adhesion between BCs, and between BCs and polar cells which enables the lead BC to communicate direction to the other cells in the cluster, providing polarity to each individual cell and ensuring collective behavior. May function in cell intercalation in the lateral epidermis during germband extension. Contributes to the determination of body left-right asymmetry by enhancing Myo31DF activity and inhibiting Myo61F activity. This is DE-cadherin from Drosophila melanogaster (Fruit fly).